We begin with the raw amino-acid sequence, 245 residues long: Eukaryotic translation initiation factor 6 (245 aa).

Belongs to the eIF-6 family. As to quaternary structure, monomer. Associates with the 60S ribosomal subunit.

It localises to the cytoplasm. The protein localises to the nucleus. It is found in the nucleolus. Binds to the 60S ribosomal subunit and prevents its association with the 40S ribosomal subunit to form the 80S initiation complex in the cytoplasm. May also be involved in ribosome biogenesis. The protein is Eukaryotic translation initiation factor 6 of Drosophila melanogaster (Fruit fly).